The primary structure comprises 260 residues: 4-hydroxy-tetrahydrodipicolinate reductase (260 aa).

Residues 8–13, Glu-35, 91–93, and 115–118 contribute to the NAD(+) site; these read GAAGRM, GTT, and APNM. The active-site Proton donor/acceptor is His-148. Residue His-149 coordinates (S)-2,3,4,5-tetrahydrodipicolinate. Lys-152 serves as the catalytic Proton donor. 158-159 lines the (S)-2,3,4,5-tetrahydrodipicolinate pocket; the sequence is GT.

The protein belongs to the DapB family.

The protein localises to the cytoplasm. It catalyses the reaction (S)-2,3,4,5-tetrahydrodipicolinate + NAD(+) + H2O = (2S,4S)-4-hydroxy-2,3,4,5-tetrahydrodipicolinate + NADH + H(+). The enzyme catalyses (S)-2,3,4,5-tetrahydrodipicolinate + NADP(+) + H2O = (2S,4S)-4-hydroxy-2,3,4,5-tetrahydrodipicolinate + NADPH + H(+). It functions in the pathway amino-acid biosynthesis; L-lysine biosynthesis via DAP pathway; (S)-tetrahydrodipicolinate from L-aspartate: step 4/4. Its function is as follows. Catalyzes the conversion of 4-hydroxy-tetrahydrodipicolinate (HTPA) to tetrahydrodipicolinate. The sequence is that of 4-hydroxy-tetrahydrodipicolinate reductase from Rubrobacter xylanophilus (strain DSM 9941 / JCM 11954 / NBRC 16129 / PRD-1).